The following is a 472-amino-acid chain: Flap endonuclease 1 (472 aa).

Positions 1–106 (MGIKGLARFL…EELMKRKERR (106 aa)) are N-domain. Mg(2+) is bound at residue aspartate 34. Residues arginine 47 and arginine 72 each coordinate DNA. The Mg(2+) site is built by aspartate 88, glutamate 160, glutamate 162, aspartate 181, and aspartate 183. The I-domain stretch occupies residues 124–263 (TIRKQLIRTI…LTAYKLLKKH (140 aa)). Glutamate 160 serves as a coordination point for DNA. DNA is bound by residues glycine 241 and aspartate 243. Aspartate 243 serves as a coordination point for Mg(2+). The interval 348 to 356 (AQTSLDSFF) is interaction with PCNA.

It belongs to the XPG/RAD2 endonuclease family. FEN1 subfamily. As to quaternary structure, interacts with PCNA. Three molecules of FEN1 bind to one PCNA trimer with each molecule binding to one PCNA monomer. PCNA stimulates the nuclease activity without altering cleavage specificity. Requires Mg(2+) as cofactor. Post-translationally, phosphorylated. Phosphorylation upon DNA damage induces relocalization to the nuclear plasma.

It localises to the nucleus. It is found in the nucleolus. The protein resides in the nucleoplasm. The protein localises to the mitochondrion. Its function is as follows. Structure-specific nuclease with 5'-flap endonuclease and 5'-3' exonuclease activities involved in DNA replication and repair. During DNA replication, cleaves the 5'-overhanging flap structure that is generated by displacement synthesis when DNA polymerase encounters the 5'-end of a downstream Okazaki fragment. It enters the flap from the 5'-end and then tracks to cleave the flap base, leaving a nick for ligation. Also involved in the long patch base excision repair (LP-BER) pathway, by cleaving within the apurinic/apyrimidinic (AP) site-terminated flap. Acts as a genome stabilization factor that prevents flaps from equilibrating into structures that lead to duplications and deletions. Also possesses 5'-3' exonuclease activity on nicked or gapped double-stranded DNA, and exhibits RNase H activity. Also involved in replication and repair of rDNA and in repairing mitochondrial DNA. The chain is Flap endonuclease 1 from Cryptosporidium muris (strain RN66).